Consider the following 312-residue polypeptide: Ribosomal RNA small subunit methyltransferase H (312 aa).

S-adenosyl-L-methionine contacts are provided by residues 33-35 (GGY), Asp51, Phe78, Asp97, and Gln104.

The protein belongs to the methyltransferase superfamily. RsmH family.

The protein localises to the cytoplasm. The catalysed reaction is cytidine(1402) in 16S rRNA + S-adenosyl-L-methionine = N(4)-methylcytidine(1402) in 16S rRNA + S-adenosyl-L-homocysteine + H(+). In terms of biological role, specifically methylates the N4 position of cytidine in position 1402 (C1402) of 16S rRNA. The polypeptide is Ribosomal RNA small subunit methyltransferase H (Orientia tsutsugamushi (strain Ikeda) (Rickettsia tsutsugamushi)).